Here is a 158-residue protein sequence, read N- to C-terminus: Encapsulin nanocompartment cargo protein EncB (158 aa).

Glu22, Glu52, and His55 together coordinate Fe cation. 2 consecutive short sequence motifs (di-iron-binding motif) follow at residues 52 to 55 (EKEH) and 58 to 61 (EAVH). The tract at residues 92-158 (ATVHVPTPDG…RGGGGSGSGR (67 aa)) is disordered. Residues 142–149 (LTVGSLRR) are probable targeting peptide. Positions 148–158 (RRGGGGSGSGR) are enriched in gly residues.

The protein belongs to the ferritin-like superfamily.

It localises to the encapsulin nanocompartment. In terms of biological role, cargo protein of a type 1 encapsulin nanocompartment. May help nucleate Fe atoms in the interior of the encapsulin nanocompartment. Present in about 36 copies/encapsulin nanocompartment. This chain is Encapsulin nanocompartment cargo protein EncB, found in Myxococcus xanthus (strain DK1622).